A 340-amino-acid polypeptide reads, in one-letter code: DNA primase large subunit PriL (340 aa).

Residues C229, C301, C310, and C318 each contribute to the [4Fe-4S] cluster site.

The protein belongs to the eukaryotic-type primase large subunit family. As to quaternary structure, heterodimer of a small subunit (PriS) and a large subunit (PriL). It depends on [4Fe-4S] cluster as a cofactor.

In terms of biological role, regulatory subunit of DNA primase, an RNA polymerase that catalyzes the synthesis of short RNA molecules used as primers for DNA polymerase during DNA replication. Stabilizes and modulates the activity of the small subunit, increasing the rate of DNA synthesis, and conferring RNA synthesis capability. The DNA polymerase activity may enable DNA primase to also catalyze primer extension after primer synthesis. May also play a role in DNA repair. The polypeptide is DNA primase large subunit PriL (Thermoplasma acidophilum (strain ATCC 25905 / DSM 1728 / JCM 9062 / NBRC 15155 / AMRC-C165)).